A 480-amino-acid polypeptide reads, in one-letter code: Phosphomethylpyrimidine synthase (480 aa).

Residues N66, M95, Y124, H159, 179-181 (SRG), 220-223 (DGLR), and E259 each bind substrate. H263 provides a ligand contact to Zn(2+). A substrate-binding site is contributed by Y286. A Zn(2+)-binding site is contributed by H327. The [4Fe-4S] cluster site is built by C407, C410, and C415. Positions 426–480 (DGDMESIEADADDRTPLEDSSAAAVNRPPVGTHDGADIPGPDADMPADTEGSADD) are disordered. Over residues 470–480 (MPADTEGSADD) the composition is skewed to acidic residues.

The protein belongs to the ThiC family. The cofactor is [4Fe-4S] cluster.

The catalysed reaction is 5-amino-1-(5-phospho-beta-D-ribosyl)imidazole + S-adenosyl-L-methionine = 4-amino-2-methyl-5-(phosphooxymethyl)pyrimidine + CO + 5'-deoxyadenosine + formate + L-methionine + 3 H(+). Its pathway is cofactor biosynthesis; thiamine diphosphate biosynthesis. In terms of biological role, catalyzes the synthesis of the hydroxymethylpyrimidine phosphate (HMP-P) moiety of thiamine from aminoimidazole ribotide (AIR) in a radical S-adenosyl-L-methionine (SAM)-dependent reaction. This Haloarcula marismortui (strain ATCC 43049 / DSM 3752 / JCM 8966 / VKM B-1809) (Halobacterium marismortui) protein is Phosphomethylpyrimidine synthase.